We begin with the raw amino-acid sequence, 549 residues long: Cilia- and flagella-associated protein 45 (549 aa).

Residues 1–29 (MPLSPAGVLSSTSTASNRSRNRPRYRTKA) are disordered. 3 coiled-coil regions span residues 119-232 (REEL…MMEV), 259-393 (IVEQ…KRNQ), and 434-522 (AVQV…KIEE). A disordered region spans residues 388–416 (RAKRNQEVADREWRRKEKENAQKKMETEA).

The protein belongs to the CFAP45 family. Microtubule inner protein component of sperm flagellar doublet microtubules. Interacts with AK8; dimerization with AK8 may create a cavity at the interface of the dimer that can accommodate AMP. Interacts with CFAP52. Interacts with ENKUR. Directly interacts with DNALI1. Interacts with DNAH11. Interacts with DNAI1. Expressed in respiratory cells (at protein level).

Its subcellular location is the cytoplasm. It is found in the cytoskeleton. The protein localises to the cilium axoneme. The protein resides in the flagellum axoneme. It localises to the cell projection. Its subcellular location is the cilium. It is found in the flagellum. Microtubule inner protein (MIP) part of the dynein-decorated doublet microtubules (DMTs) in cilia axoneme, which is required for motile cilia beating. It is an AMP-binding protein that may facilitate dynein ATPase-dependent ciliary and flagellar beating via adenine nucleotide homeostasis. May function as a donor of AMP to AK8 and hence promote ADP production. In Sus scrofa (Pig), this protein is Cilia- and flagella-associated protein 45 (CFAP45).